A 400-amino-acid chain; its full sequence is Cysteine desulfurase (400 aa).

Pyridoxal 5'-phosphate contacts are provided by residues 72-73, asparagine 152, glutamine 180, and 200-202; these read GT and SGH. Residue lysine 203 is modified to N6-(pyridoxal phosphate)lysine. A pyridoxal 5'-phosphate-binding site is contributed by threonine 238. The Cysteine persulfide intermediate role is filled by cysteine 326. Cysteine 326 serves as a coordination point for [2Fe-2S] cluster.

This sequence belongs to the class-V pyridoxal-phosphate-dependent aminotransferase family. NifS/IscS subfamily. As to quaternary structure, homodimer. Pyridoxal 5'-phosphate serves as cofactor.

The enzyme catalyses (sulfur carrier)-H + L-cysteine = (sulfur carrier)-SH + L-alanine. Its function is as follows. Catalyzes the removal of elemental sulfur atoms from cysteine to produce alanine. Seems to participate in the biosynthesis of the nitrogenase metalloclusters by providing the inorganic sulfur required for the Fe-S core formation. In Gluconacetobacter diazotrophicus (strain ATCC 49037 / DSM 5601 / CCUG 37298 / CIP 103539 / LMG 7603 / PAl5), this protein is Cysteine desulfurase.